The chain runs to 135 residues: Large ribosomal subunit protein uL16c (135 aa).

Basic residues predominate over residues 1-23; that stretch reads MLSPKKTKFRKEHRGRMKGRSSR. Residues 1–24 are disordered; that stretch reads MLSPKKTKFRKEHRGRMKGRSSRG.

It belongs to the universal ribosomal protein uL16 family. As to quaternary structure, part of the 50S ribosomal subunit.

It localises to the plastid. Its subcellular location is the chloroplast. This chain is Large ribosomal subunit protein uL16c, found in Pelargonium hortorum (Common geranium).